The sequence spans 217 residues: Adenylate kinase (217 aa).

10–15 (GAGKGT) is an ATP binding site. The tract at residues 30-59 (STGDILRAAVSEMTPMGVKAKGYMESGALV) is NMP. Residues Thr31, Arg36, 57-59 (ALV), 85-88 (GFPR), and Gln92 each bind AMP. Residues 126–163 (GRRTCRLCGKGYHVVFDPPRVSGRCDECLGELFQRDDD) are LID. Arg127 provides a ligand contact to ATP. The Zn(2+) site is built by Cys130, Cys133, Cys150, and Cys153. AMP contacts are provided by Arg160 and Arg171. Gly199 contacts ATP.

It belongs to the adenylate kinase family. In terms of assembly, monomer.

It is found in the cytoplasm. It carries out the reaction AMP + ATP = 2 ADP. Its pathway is purine metabolism; AMP biosynthesis via salvage pathway; AMP from ADP: step 1/1. Catalyzes the reversible transfer of the terminal phosphate group between ATP and AMP. Plays an important role in cellular energy homeostasis and in adenine nucleotide metabolism. The sequence is that of Adenylate kinase from Geotalea uraniireducens (strain Rf4) (Geobacter uraniireducens).